A 2924-amino-acid chain; its full sequence is Probable polyketide synthase 6 (2924 aa).

In terms of domain architecture, Ketosynthase family 3 (KS3) spans 11-442; the sequence is EKGVAIVGIG…GSNCCLLISE (432 aa). Catalysis depends on for beta-ketoacyl synthase activity residues C181, H323, and H362. Positions 635-668 are acyl/malonyl transferase; it reads GVNPSFILGHSLGEISASYCSGMIDLDTFCYTVY. S645 functions as the For acyl/malonyl transferase activity in the catalytic mechanism. Residues 925 to 1047 are N-terminal hotdog fold; sequence IDHLGLSNSY…SNFQLLDHGN (123 aa). The PKS/mFAS DH domain occupies 925-1210; sequence IDHLGLSNSY…CKSLIPIKDS (286 aa). Residue H959 is the Proton acceptor; for dehydratase activity of the active site. Positions 1064-1210 are C-terminal hotdog fold; it reads NLSKLTKNEL…CKSLIPIKDS (147 aa). D1122 functions as the Proton donor; for dehydratase activity in the catalytic mechanism. One can recognise a Carrier domain in the interval 2431–2508; that stretch reads TGNKNIDELF…ISIKMILNSL (78 aa). S2468 is subject to O-(pantetheine 4'-phosphoryl)serine. A helical transmembrane segment spans residues 2551-2571; that stretch reads KIILLTGTTGFLGGFLLFNML.

Pantetheine 4'-phosphate serves as cofactor.

Its subcellular location is the membrane. Probable polyketide synthase. In Dictyostelium discoideum (Social amoeba), this protein is Probable polyketide synthase 6 (pks6).